The primary structure comprises 611 residues: MTIEFTDWPQDRAQRYRDAGYWIDQPLTEILHSRCQAQPQALAIICGERRFTYGELDTLSSILASRLAEQGLGQGDTALVQLPNVAEFYIVLFALLKAGIVPLNALFSHRRLELTAYAKQIVPKLLIASREHEVFRDDAYVQAFAEVGAAPAVTLLLGESDPAASLAHWIETPGSQPVAYAPTAADQVALFQLSGGSTGIPKLIPRTHNDYHYNARACADVCALNAHTRFLCAVPAAHNFLLSSPGALGVFHAGGCVVMAASPEPLSCFALVEQHEVNTVALVPSAVALWLQAAPAHRDKLQSLAYLQVGGAVFADSLARQVPGVLGCQLQQVFGMAEGLINYTRLDDSDEQIFTTQGRPVSPDDEIKIVDEQGVPVAPGEPGMLATRGPYTFCGYYKAPEQNASAFDAEGFYYSGDLVVLTPSGDLRVVGRIKDQINRGGEKVASEEIENLLVLHPEVTHAGLVAMPDEALGEKSCAFVVSRNPSLKAPALRRHLMELGIAEYKLPDRIRLIEAMPLTAVGKIDKKQLRHLVSVENTRTWLQTRLRQLIEDSEELDPEENLIFYGLDSLQVMKLAAELKARGIEVSFEELASTPTLASWWALVEARQKAA.

The Carrier domain occupies 533-608; that stretch reads VSVENTRTWL…SWWALVEARQ (76 aa). S569 is subject to O-(pantetheine 4'-phosphoryl)serine.

This sequence belongs to the ATP-dependent AMP-binding enzyme family. Pantetheine 4'-phosphate serves as cofactor.

It catalyses the reaction salicylate + holo-[ACP] + ATP = salicyl-[ACP] + AMP + diphosphate. It functions in the pathway siderophore biosynthesis; pseudomonine biosynthesis. Its function is as follows. Involved in the biosynthesis of the siderophore pseudomonine. Specifically adenylates salicylate and loads it onto its peptidyl carrier domain, via a thioester linkage to the phosphopanthetheine moiety. This is Pseudomonine synthase PmsE from Pseudomonas entomophila (strain L48).